Reading from the N-terminus, the 111-residue chain is Small ribosomal subunit protein uS15c (111 aa).

This sequence belongs to the universal ribosomal protein uS15 family. In terms of assembly, part of the 30S ribosomal subunit.

The protein localises to the plastid. It is found in the chloroplast. The polypeptide is Small ribosomal subunit protein uS15c (rps15) (Staurastrum punctulatum (Green alga)).